A 295-amino-acid polypeptide reads, in one-letter code: Acetaldehyde dehydrogenase (295 aa).

11 to 14 serves as a coordination point for NAD(+); the sequence is SGNI. The Acyl-thioester intermediate role is filled by Cys-127. Residues 158–166 and Asn-269 contribute to the NAD(+) site; that span reads SAGPGTRSN.

The protein belongs to the acetaldehyde dehydrogenase family.

It carries out the reaction acetaldehyde + NAD(+) + CoA = acetyl-CoA + NADH + H(+). The sequence is that of Acetaldehyde dehydrogenase from Brevibacillus brevis (strain 47 / JCM 6285 / NBRC 100599).